The sequence spans 314 residues: uncharacterized protein (314 aa).

It to M.leprae ML0607.

This is an uncharacterized protein from Mycobacterium bovis (strain ATCC BAA-935 / AF2122/97).